Consider the following 267-residue polypeptide: Protein isy-1 (267 aa).

A coiled-coil region spans residues 175 to 204 (LEKLIEEKNIERINKEFAEKQAQKQQTASD). The disordered stretch occupies residues 195-221 (QAQKQQTASDAAPENIYKVEEDDDDDL).

Belongs to the ISY1 family. In terms of tissue distribution, ubiquitously expressed.

The protein localises to the nucleus. Functionally, regulates the processing of the mir-60 microRNA (miRNA), which in turn negatively regulates the expression of the transcription factor zip-10. Does not affect the splicing of zip-10. This Caenorhabditis elegans protein is Protein isy-1.